The chain runs to 155 residues: Endoribonuclease YbeY (155 aa).

Residues His-119, His-123, and His-129 each contribute to the Zn(2+) site.

This sequence belongs to the endoribonuclease YbeY family. It depends on Zn(2+) as a cofactor.

It is found in the cytoplasm. Single strand-specific metallo-endoribonuclease involved in late-stage 70S ribosome quality control and in maturation of the 3' terminus of the 16S rRNA. This chain is Endoribonuclease YbeY, found in Mycoplasmopsis synoviae (strain 53) (Mycoplasma synoviae).